Consider the following 209-residue polypeptide: LexA repressor (209 aa).

Positions 28–48 (RVELAKILGFRSANAAEEHLK) form a DNA-binding region, H-T-H motif. Catalysis depends on for autocatalytic cleavage activity residues Ser-126 and Lys-163.

The protein belongs to the peptidase S24 family. Homodimer.

It carries out the reaction Hydrolysis of Ala-|-Gly bond in repressor LexA.. Represses a number of genes involved in the response to DNA damage (SOS response), including recA and lexA. In the presence of single-stranded DNA, RecA interacts with LexA causing an autocatalytic cleavage which disrupts the DNA-binding part of LexA, leading to derepression of the SOS regulon and eventually DNA repair. The protein is LexA repressor of Psychromonas ingrahamii (strain DSM 17664 / CCUG 51855 / 37).